The primary structure comprises 283 residues: MNQETHDKTPRTHGMDISLIERGVKKLKLKDETCCLQVKQFNFYYNQHTQALKSINLIIPERRVTAFIGPSGCGKSTLLRCFNRMNDLIDGARIEGEMLLNKQDIYGKNVNVSDLRRRVGMVFQKPNPFPKSIYENVAYGLRLQGVKSRRTLDKVVEKSLRSAALWDEVKDRLDDNAVGLSGGQQQRLVIARAIAIEPEVLLLDEPASALDPISTLKIEELIYDLKDKYTIVIVTHNMQQAARVSDYTAFMYLGELIEFGDTGTLFTNPKKKQTEDYITGRYG.

One can recognise an ABC transporter domain in the interval 36–278 (LQVKQFNFYY…PKKKQTEDYI (243 aa)). Residue 69–76 (GPSGCGKS) coordinates ATP.

The protein belongs to the ABC transporter superfamily. Phosphate importer (TC 3.A.1.7) family. In terms of assembly, the complex is composed of two ATP-binding proteins (PstB), two transmembrane proteins (PstC and PstA) and a solute-binding protein (PstS).

It is found in the cell inner membrane. It carries out the reaction phosphate(out) + ATP + H2O = ADP + 2 phosphate(in) + H(+). Functionally, part of the ABC transporter complex PstSACB involved in phosphate import. Responsible for energy coupling to the transport system. The chain is Phosphate import ATP-binding protein PstB 2 from Nitrosococcus oceani (strain ATCC 19707 / BCRC 17464 / JCM 30415 / NCIMB 11848 / C-107).